Here is a 214-residue protein sequence, read N- to C-terminus: tRNA (guanine-N(7)-)-methyltransferase (214 aa).

Glu43, Glu68, Asp95, and Asp117 together coordinate S-adenosyl-L-methionine. Asp117 is a catalytic residue. Substrate is bound by residues Lys121, Asp153, and 191–194 (TEYE).

Belongs to the class I-like SAM-binding methyltransferase superfamily. TrmB family.

It carries out the reaction guanosine(46) in tRNA + S-adenosyl-L-methionine = N(7)-methylguanosine(46) in tRNA + S-adenosyl-L-homocysteine. The protein operates within tRNA modification; N(7)-methylguanine-tRNA biosynthesis. In terms of biological role, catalyzes the formation of N(7)-methylguanine at position 46 (m7G46) in tRNA. This is tRNA (guanine-N(7)-)-methyltransferase from Lachnoclostridium phytofermentans (strain ATCC 700394 / DSM 18823 / ISDg) (Clostridium phytofermentans).